The sequence spans 287 residues: Pyridoxal kinase PdxY (287 aa).

Substrate is bound by residues Ser-10 and 45–46 (TQ). Residues Asp-112, Ala-144, Glu-149, Lys-182, and 209–212 (RPLV) each bind ATP. Asp-224 lines the substrate pocket.

Belongs to the pyridoxine kinase family. PdxY subfamily. In terms of assembly, homodimer. The cofactor is Mg(2+).

It catalyses the reaction pyridoxal + ATP = pyridoxal 5'-phosphate + ADP + H(+). The protein operates within cofactor metabolism; pyridoxal 5'-phosphate salvage; pyridoxal 5'-phosphate from pyridoxal: step 1/1. Functionally, pyridoxal kinase involved in the salvage pathway of pyridoxal 5'-phosphate (PLP). Catalyzes the phosphorylation of pyridoxal to PLP. This chain is Pyridoxal kinase PdxY, found in Escherichia coli O157:H7.